The chain runs to 257 residues: Thiazole synthase (257 aa).

Lys-95 functions as the Schiff-base intermediate with DXP in the catalytic mechanism. 1-deoxy-D-xylulose 5-phosphate-binding positions include Gly-156, 182 to 183 (AG), and 204 to 205 (NT).

The protein belongs to the ThiG family. As to quaternary structure, homotetramer. Forms heterodimers with either ThiH or ThiS.

The protein localises to the cytoplasm. The catalysed reaction is [ThiS sulfur-carrier protein]-C-terminal-Gly-aminoethanethioate + 2-iminoacetate + 1-deoxy-D-xylulose 5-phosphate = [ThiS sulfur-carrier protein]-C-terminal Gly-Gly + 2-[(2R,5Z)-2-carboxy-4-methylthiazol-5(2H)-ylidene]ethyl phosphate + 2 H2O + H(+). Its pathway is cofactor biosynthesis; thiamine diphosphate biosynthesis. In terms of biological role, catalyzes the rearrangement of 1-deoxy-D-xylulose 5-phosphate (DXP) to produce the thiazole phosphate moiety of thiamine. Sulfur is provided by the thiocarboxylate moiety of the carrier protein ThiS. In vitro, sulfur can be provided by H(2)S. The chain is Thiazole synthase from Vibrio vulnificus (strain CMCP6).